Reading from the N-terminus, the 274-residue chain is WIMGHMVNAIEQVDEFLNLGANAIEFDIDFDKDGIAQITHHGIPCDCGRKCTKKAIFTEYLDNIRQVTTPDDPKFREQLVLLALDLKLQRISSAKAYRAGEDVAKKLLDHYWQRGNSRARAYILLNIPLVEDYEFIRAFKDTLKNEGYESYNDKVGINFTGNEDLDKIRDVLEILGIHKQVWQADGITSCFARGTERLKEALEKRDTPGYNYINKVYAWTLVRKSIMRRSLRLGVDGVMSNNPDRVIKVLKEKEFADKFRLATYNDNPWEKFRG.

Histidine 5 is a catalytic residue. Mg(2+) contacts are provided by glutamate 25 and aspartate 27. Residue histidine 41 is the Nucleophile of the active site. 2 cysteine pairs are disulfide-bonded: cysteine 45-cysteine 51 and cysteine 47-cysteine 190. Aspartate 85 is a Mg(2+) binding site.

This sequence belongs to the arthropod phospholipase D family. Class II subfamily. Mg(2+) is required as a cofactor. Expressed by the venom gland.

Its subcellular location is the secreted. The enzyme catalyses an N-(acyl)-sphingosylphosphocholine = an N-(acyl)-sphingosyl-1,3-cyclic phosphate + choline. The catalysed reaction is an N-(acyl)-sphingosylphosphoethanolamine = an N-(acyl)-sphingosyl-1,3-cyclic phosphate + ethanolamine. It catalyses the reaction a 1-acyl-sn-glycero-3-phosphocholine = a 1-acyl-sn-glycero-2,3-cyclic phosphate + choline. It carries out the reaction a 1-acyl-sn-glycero-3-phosphoethanolamine = a 1-acyl-sn-glycero-2,3-cyclic phosphate + ethanolamine. Dermonecrotic toxins cleave the phosphodiester linkage between the phosphate and headgroup of certain phospholipids (sphingolipid and lysolipid substrates), forming an alcohol (often choline) and a cyclic phosphate. This toxin acts on sphingomyelin (SM). It may also act on ceramide phosphoethanolamine (CPE), lysophosphatidylcholine (LPC) and lysophosphatidylethanolamine (LPE), but not on lysophosphatidylserine (LPS), and lysophosphatidylglycerol (LPG). It acts by transphosphatidylation, releasing exclusively cyclic phosphate products as second products. Induces dermonecrosis, hemolysis, increased vascular permeability, edema, inflammatory response, and platelet aggregation. This chain is Dermonecrotic toxin SdSicTox-betaIIB1bvii, found in Sicarius cf. damarensis (strain GJB-2008) (Six-eyed sand spider).